A 262-amino-acid chain; its full sequence is Sepiapterin reductase (262 aa).

N-acetylmethionine is present on Met1. 15-21 is an NADP(+) binding site; sequence GASRGFG. A Phosphoserine modification is found at Ser33. 43-44 contacts NADP(+); the sequence is RS. A Phosphoserine; by CaMK2; in vitro modification is found at Ser46. Residue 70 to 71 coordinates NADP(+); it reads DL. Substrate-binding positions include 158-159 and Tyr171; that span reads SL. Lys175 serves as a coordination point for NADP(+). Phosphoserine; by CaMK2; in vitro is present on Ser196. Gly200 contributes to the substrate binding site. Residue 202–207 coordinates NADP(+); the sequence is LDTNMQ. The residue at position 214 (Ser214) is a Phosphoserine; by CaMK2; in vitro. Asp258 is a binding site for substrate.

It belongs to the sepiapterin reductase family. In terms of assembly, homodimer. In terms of processing, in vitro phosphorylation of Ser-46, Ser-196 and Ser-214 by CaMK2 does not change kinetic parameters.

The protein resides in the cytoplasm. It carries out the reaction L-erythro-7,8-dihydrobiopterin + NADP(+) = L-sepiapterin + NADPH + H(+). It catalyses the reaction (6R)-L-erythro-5,6,7,8-tetrahydrobiopterin + 2 NADP(+) = 6-pyruvoyl-5,6,7,8-tetrahydropterin + 2 NADPH + 2 H(+). Catalyzes the final one or two reductions in tetra-hydrobiopterin biosynthesis to form 5,6,7,8-tetrahydrobiopterin. The sequence is that of Sepiapterin reductase (Spr) from Rattus norvegicus (Rat).